The following is an 87-amino-acid chain: Large ribosomal subunit protein bL31B (87 aa).

This sequence belongs to the bacterial ribosomal protein bL31 family. Type B subfamily. As to quaternary structure, part of the 50S ribosomal subunit.

This chain is Large ribosomal subunit protein bL31B, found in Burkholderia vietnamiensis (strain G4 / LMG 22486) (Burkholderia cepacia (strain R1808)).